Here is a 285-residue protein sequence, read N- to C-terminus: MRREQQLPAAVAAPVADGGQLMRAVDLTLGFGPKTVLEQVSLDFPARSVTTLLGPTGSGKTTFLRTLNRMNDKVSGFRHSGDVLLGGRTIFADRDLMEFRRSVGMLFQRPNPFPMSIMDNVVAGVRAHKMAPRKQFKTVAEARLTEVGLWDAVKDRLGDSPFRLSGGQQQLLCLARALAVNPDVLLLDEPTSSLDPTTTEKIEGLIRSLADRLTVIMVTHDLAQAARTGDRTAFFFEGRLVEEGPTKHLFLSPQHEETVRYFAPFRPAQGSDRGSSQTAGVAESQ.

The ABC transporter domain maps to 22–262; it reads MRAVDLTLGF…PQHEETVRYF (241 aa). Position 54 to 61 (54 to 61) interacts with ATP; the sequence is GPTGSGKT. A disordered region spans residues 266-285; the sequence is RPAQGSDRGSSQTAGVAESQ. Residues 272-285 are compositionally biased toward polar residues; sequence DRGSSQTAGVAESQ.

This sequence belongs to the ABC transporter superfamily. Phosphate importer (TC 3.A.1.7) family. In terms of assembly, the complex is composed of two ATP-binding proteins (PstB), two transmembrane proteins (PstC and PstA) and a solute-binding protein (PstS).

The protein resides in the cell membrane. The enzyme catalyses phosphate(out) + ATP + H2O = ADP + 2 phosphate(in) + H(+). Its function is as follows. Part of the ABC transporter complex PstSACB involved in phosphate import. Responsible for energy coupling to the transport system. The protein is Phosphate import ATP-binding protein PstB of Mycobacterium intracellulare.